The primary structure comprises 224 residues: 7-cyano-7-deazaguanine synthase (224 aa).

9–19 lines the ATP pocket; the sequence is ISGGMDSTLCA. Cys190, Cys198, Cys201, and Cys204 together coordinate Zn(2+).

This sequence belongs to the QueC family. Zn(2+) is required as a cofactor.

It carries out the reaction 7-carboxy-7-deazaguanine + NH4(+) + ATP = 7-cyano-7-deazaguanine + ADP + phosphate + H2O + H(+). It participates in purine metabolism; 7-cyano-7-deazaguanine biosynthesis. Its function is as follows. Catalyzes the ATP-dependent conversion of 7-carboxy-7-deazaguanine (CDG) to 7-cyano-7-deazaguanine (preQ(0)). The protein is 7-cyano-7-deazaguanine synthase of Campylobacter jejuni (strain RM1221).